The sequence spans 212 residues: ATP phosphoribosyltransferase (212 aa).

It belongs to the ATP phosphoribosyltransferase family. Short subfamily. Heteromultimer composed of HisG and HisZ subunits.

The protein localises to the cytoplasm. It catalyses the reaction 1-(5-phospho-beta-D-ribosyl)-ATP + diphosphate = 5-phospho-alpha-D-ribose 1-diphosphate + ATP. Its pathway is amino-acid biosynthesis; L-histidine biosynthesis; L-histidine from 5-phospho-alpha-D-ribose 1-diphosphate: step 1/9. Catalyzes the condensation of ATP and 5-phosphoribose 1-diphosphate to form N'-(5'-phosphoribosyl)-ATP (PR-ATP). Has a crucial role in the pathway because the rate of histidine biosynthesis seems to be controlled primarily by regulation of HisG enzymatic activity. The sequence is that of ATP phosphoribosyltransferase from Prochlorococcus marinus (strain MIT 9301).